The primary structure comprises 254 residues: 5-oxoprolinase subunit A (254 aa).

The protein belongs to the LamB/PxpA family. In terms of assembly, forms a complex composed of PxpA, PxpB and PxpC.

The enzyme catalyses 5-oxo-L-proline + ATP + 2 H2O = L-glutamate + ADP + phosphate + H(+). Catalyzes the cleavage of 5-oxoproline to form L-glutamate coupled to the hydrolysis of ATP to ADP and inorganic phosphate. The polypeptide is 5-oxoprolinase subunit A (Rhodopseudomonas palustris (strain BisB5)).